A 293-amino-acid chain; its full sequence is Transcription elongation factor S-II (293 aa).

The 78-residue stretch at 4–81 (ADIRSAKAAL…KKWKADVSKG (78 aa)) folds into the TFIIS N-terminal domain. The segment at 81–123 (GRPLKTTTTTSSTPSKHADVGSQAQKQVQKQSSSGQRTFKSDN) is disordered. Over residues 100–116 (VGSQAQKQVQKQSSSGQ) the composition is skewed to low complexity. The TFIIS central domain occupies 133–248 (IRNNCIGLMY…HAQGAKPQKA (116 aa)). Residues 251–291 (DLFTCGKCKQKKVSYYQMQTRSADEPMTTFCECTVCGNRWK) form a TFIIS-type zinc finger. Zn(2+)-binding residues include C255, C258, C283, and C286.

Belongs to the TFS-II family.

It is found in the nucleus. Functionally, necessary for efficient RNA polymerase II transcription elongation past template-encoded arresting sites. The arresting sites in DNA have the property of trapping a certain fraction of elongating RNA polymerases that pass through, resulting in locked ternary complexes. Cleavage of the nascent transcript by S-II allows the resumption of elongation from the new 3'-terminus. This is Transcription elongation factor S-II (tfs1) from Schizosaccharomyces pombe (strain 972 / ATCC 24843) (Fission yeast).